The chain runs to 175 residues: Adenylyl-sulfate kinase (175 aa).

12–19 (GLSGAGKT) provides a ligand contact to ATP. Catalysis depends on Ser-86, which acts as the Phosphoserine intermediate.

The protein belongs to the APS kinase family.

It carries out the reaction adenosine 5'-phosphosulfate + ATP = 3'-phosphoadenylyl sulfate + ADP + H(+). The protein operates within sulfur metabolism; hydrogen sulfide biosynthesis; sulfite from sulfate: step 2/3. In terms of biological role, catalyzes the synthesis of activated sulfate. In Synechococcus sp. (strain JA-2-3B'a(2-13)) (Cyanobacteria bacterium Yellowstone B-Prime), this protein is Adenylyl-sulfate kinase.